A 139-amino-acid chain; its full sequence is 10 kDa chaperonin 2, chloroplastic (139 aa).

A chloroplast-targeting transit peptide spans 1–39 (MASTFVCSLPNPFFAFPVKATTPSTANHTLLGSRRGCLR). Positions 51-138 (KVVPQADRVL…CKESDLLALV (88 aa)) are cpn-10 domain.

The protein belongs to the GroES chaperonin family. In terms of tissue distribution, expressed in leaves and stems. Expressed at low levels in germinating seeds, seedlings, rosettes leaves, flowers and siliques.

It is found in the plastid. It localises to the chloroplast stroma. Its function is as follows. Functions as a co-chaperone for protein folding in chloroplasts. The chain is 10 kDa chaperonin 2, chloroplastic from Arabidopsis thaliana (Mouse-ear cress).